Reading from the N-terminus, the 459-residue chain is ATP-dependent protease ATPase subunit HslU (459 aa).

ATP contacts are provided by residues valine 21, 63–68, aspartate 273, glutamate 338, and arginine 410; that span reads GVGKTE.

This sequence belongs to the ClpX chaperone family. HslU subfamily. In terms of assembly, a double ring-shaped homohexamer of HslV is capped on each side by a ring-shaped HslU homohexamer. The assembly of the HslU/HslV complex is dependent on binding of ATP.

It localises to the cytoplasm. Its function is as follows. ATPase subunit of a proteasome-like degradation complex; this subunit has chaperone activity. The binding of ATP and its subsequent hydrolysis by HslU are essential for unfolding of protein substrates subsequently hydrolyzed by HslV. HslU recognizes the N-terminal part of its protein substrates and unfolds these before they are guided to HslV for hydrolysis. In Thermosipho africanus (strain TCF52B), this protein is ATP-dependent protease ATPase subunit HslU.